Consider the following 460-residue polypeptide: C4-dicarboxylate transport protein (460 aa).

The next 8 membrane-spanning stretches (helical) occupy residues 21-38, 53-75, 88-110, 153-175, 196-218, 231-253, 301-323, and 363-385; these read LYFQ…IGHF, FIKL…GIAG, YALL…VVNV, IVGA…FGFA, VMFN…AMAF, LGQL…LGSI, VVGL…YLTM, and FIVL…ALIL. The tract at residues 438–460 is disordered; that stretch reads PEDDLGVAEGPTPANAVNTTKTV.

Belongs to the dicarboxylate/amino acid:cation symporter (DAACS) (TC 2.A.23) family.

Its subcellular location is the cell inner membrane. Responsible for the transport of dicarboxylates such as succinate, fumarate, and malate from the periplasm across the membrane. The protein is C4-dicarboxylate transport protein of Pseudomonas syringae pv. tomato (strain ATCC BAA-871 / DC3000).